We begin with the raw amino-acid sequence, 522 residues long: Chromosomal replication initiator protein DnaA (522 aa).

The tract at residues 1–71 is domain I, interacts with DnaA modulators; that stretch reads MQDFWHAASA…QSLACDYWEM (71 aa). Residues 71-185 form a domain II region; sequence MQVDVQFVLD…PVDDTVHERS (115 aa). Residues 186 to 402 are domain III, AAA+ region; that stretch reads RLNPILTFDN…GALRKILAYS (217 aa). Positions 230, 232, 233, and 234 each coordinate ATP. Residues 403–522 form a domain IV, binds dsDNA region; sequence NFHGKEITIE…LHVLEQTLKG (120 aa).

The protein belongs to the DnaA family. Oligomerizes as a right-handed, spiral filament on DNA at oriC.

The protein localises to the cytoplasm. In terms of biological role, plays an essential role in the initiation and regulation of chromosomal replication. ATP-DnaA binds to the origin of replication (oriC) to initiate formation of the DNA replication initiation complex once per cell cycle. Binds the DnaA box (a 9 base pair repeat at the origin) and separates the double-stranded (ds)DNA. Forms a right-handed helical filament on oriC DNA; dsDNA binds to the exterior of the filament while single-stranded (ss)DNA is stabiized in the filament's interior. The ATP-DnaA-oriC complex binds and stabilizes one strand of the AT-rich DNA unwinding element (DUE), permitting loading of DNA polymerase. After initiation quickly degrades to an ADP-DnaA complex that is not apt for DNA replication. Binds acidic phospholipids. This Ralstonia nicotianae (strain ATCC BAA-1114 / GMI1000) (Ralstonia solanacearum) protein is Chromosomal replication initiator protein DnaA.